We begin with the raw amino-acid sequence, 291 residues long: MGLAAPRKRTKISHDPNNTTWSRSTDGFGHRILKAQGWTPGSFLGPRNAAHSDLFTTASASHIRVVLKDDNLGLGARPKRGLLDEPTGLDAFKGLLGRLNGKSETQLVVEQQKRDDIKLARYAAAKWQAVRFVSGGLLVQESNETLVPPTSQNGQADSEVKNVPQGREEGLADDETTNSDSEDRHSVEKRKKKETNSRGSREKERKREKRQMRRDKKRKTSESTESEAEMQEKTRVQGPSEDVKPTEPKAPTLSRERRPMGRQMFRGRYIAQKKRALMDDKSLNEIFMIST.

Positions 1–11 (MGLAAPRKRTK) are enriched in basic residues. Disordered stretches follow at residues 1-26 (MGLAAPRKRTKISHDPNNTTWSRSTD) and 146-268 (LVPP…FRGR). 2 stretches are compositionally biased toward polar residues: residues 15-25 (DPNNTTWSRST) and 146-156 (LVPPTSQNGQA). The G-patch domain maps to 25-79 (TDGFGHRILKAQGWTPGSFLGPRNAAHSDLFTTASASHIRVVLKDDNLGLGARPK). A compositionally biased stretch (basic and acidic residues) spans 194 to 205 (ETNSRGSREKER). The segment covering 206 to 219 (KREKRQMRRDKKRK) has biased composition (basic residues). Positions 230-247 (MQEKTRVQGPSEDVKPTE) are enriched in basic and acidic residues.

The protein belongs to the PINX1 family.

The protein resides in the nucleus. The protein localises to the nucleolus. Involved in rRNA-processing at A0, A1 and A2 sites and negatively regulates telomerase. The polypeptide is Protein pxr1 (pxr1) (Aspergillus clavatus (strain ATCC 1007 / CBS 513.65 / DSM 816 / NCTC 3887 / NRRL 1 / QM 1276 / 107)).